A 171-amino-acid polypeptide reads, in one-letter code: UPF0312 protein SAV2687 (171 aa).

It belongs to the UPF0312 family.

The protein is UPF0312 protein SAV2687 of Staphylococcus aureus (strain Mu50 / ATCC 700699).